Reading from the N-terminus, the 206-residue chain is Ribosomal RNA large subunit methyltransferase E (206 aa).

S-adenosyl-L-methionine is bound by residues Gly-60, Trp-62, Asp-80, Asp-96, and Asp-121. Lys-161 acts as the Proton acceptor in catalysis.

The protein belongs to the class I-like SAM-binding methyltransferase superfamily. RNA methyltransferase RlmE family.

The protein resides in the cytoplasm. The catalysed reaction is uridine(2552) in 23S rRNA + S-adenosyl-L-methionine = 2'-O-methyluridine(2552) in 23S rRNA + S-adenosyl-L-homocysteine + H(+). Functionally, specifically methylates the uridine in position 2552 of 23S rRNA at the 2'-O position of the ribose in the fully assembled 50S ribosomal subunit. The polypeptide is Ribosomal RNA large subunit methyltransferase E (Francisella tularensis subsp. holarctica (strain FTNF002-00 / FTA)).